The primary structure comprises 172 residues: Ribosome maturation factor RimM (172 aa).

One can recognise a PRC barrel domain in the interval 94–167 (EGSYYYKDII…VAHVIVPEGL (74 aa)).

It belongs to the RimM family. In terms of assembly, binds ribosomal protein uS19.

Its subcellular location is the cytoplasm. Functionally, an accessory protein needed during the final step in the assembly of 30S ribosomal subunit, possibly for assembly of the head region. Essential for efficient processing of 16S rRNA. May be needed both before and after RbfA during the maturation of 16S rRNA. It has affinity for free ribosomal 30S subunits but not for 70S ribosomes. The polypeptide is Ribosome maturation factor RimM (Lacticaseibacillus paracasei (strain ATCC 334 / BCRC 17002 / CCUG 31169 / CIP 107868 / KCTC 3260 / NRRL B-441) (Lactobacillus paracasei)).